The primary structure comprises 340 residues: Serine racemase (340 aa).

E13 provides a ligand contact to Mg(2+). Positions 31, 32, 33, 51, and 52 each coordinate ATP. Residue K56 is the Proton acceptor of the active site. K56 is modified (N6-(pyridoxal phosphate)lysine). 2 residues coordinate Ca(2+): P69 and T81. Residue S84 is the Proton acceptor of the active site. A pyridoxal 5'-phosphate-binding site is contributed by N86. Q89 contributes to the ATP binding site. C113 bears the S-nitrosocysteine mark. ATP is bound at residue Y121. Residue N154 participates in pyridoxal 5'-phosphate binding. A Mg(2+)-binding site is contributed by D178. Pyridoxal 5'-phosphate is bound by residues G185, G186, G187, G188, and M189. Mg(2+) is bound by residues E210, A214, D216, and N247. E210, A214, D216, and N247 together coordinate Ca(2+). Positions 210, 214, and 216 each coordinate Mn(2+). K279 provides a ligand contact to ATP. Pyridoxal 5'-phosphate is bound at residue S313. Residue N316 coordinates ATP.

The protein belongs to the serine/threonine dehydratase family. In terms of assembly, homodimer. Requires Mg(2+) as cofactor. It depends on Mn(2+) as a cofactor. Ca(2+) serves as cofactor. Pyridoxal 5'-phosphate is required as a cofactor. S-nitrosylated, leading to decrease the enzyme activity. As to expression, expressed in the cerebellum, hippocampus, dorsolateral prefrontal cortex, and in motor neurons and glial cells of the lumbar spinal cord (at protein level). Increased in the dorsolateral prefrontal cortex of schizophrenic patients (at protein level). Brain: expressed at high levels in hippocampus and corpus callosum, intermediate levels in substantia nigra and caudate, and low levels in amygdala, thalamus, and subthalamic nuclei. Expressed in heart, skeletal muscle, kidney, and liver.

It catalyses the reaction L-serine = D-serine. It carries out the reaction D-serine = pyruvate + NH4(+). The catalysed reaction is L-serine = pyruvate + NH4(+). Its activity is regulated as follows. Allosterically activated by magnesium, and possibly also other divalent metal cations. Allosterically activated by ATP, ADP or GTP. Competitively inhibited by malonate. Inhibited by meso-tartrate and malonate. Catalyzes the synthesis of D-serine from L-serine. D-serine is a key coagonist with glutamate at NMDA receptors. Has dehydratase activity towards both L-serine and D-serine. In Homo sapiens (Human), this protein is Serine racemase (SRR).